The primary structure comprises 148 residues: Large-conductance mechanosensitive channel (148 aa).

Transmembrane regions (helical) follow at residues 21–41 (IDLA…DSVV), 45–65 (IMPL…KFLV), and 92–112 (GNFL…FIIV).

The protein belongs to the MscL family. As to quaternary structure, homopentamer.

It localises to the cell inner membrane. In terms of biological role, channel that opens in response to stretch forces in the membrane lipid bilayer. May participate in the regulation of osmotic pressure changes within the cell. In Bordetella petrii (strain ATCC BAA-461 / DSM 12804 / CCUG 43448), this protein is Large-conductance mechanosensitive channel.